A 157-amino-acid polypeptide reads, in one-letter code: 2-C-methyl-D-erythritol 2,4-cyclodiphosphate synthase (157 aa).

Residues aspartate 8 and histidine 10 each contribute to the a divalent metal cation site. 4-CDP-2-C-methyl-D-erythritol 2-phosphate-binding positions include 8-10 and 34-35; these read DVH and HS. Residue histidine 42 coordinates a divalent metal cation. Residues 56–58, 132–135, and arginine 142 each bind 4-CDP-2-C-methyl-D-erythritol 2-phosphate; these read DIG and TTNE.

Belongs to the IspF family. Homotrimer. A divalent metal cation serves as cofactor.

It carries out the reaction 4-CDP-2-C-methyl-D-erythritol 2-phosphate = 2-C-methyl-D-erythritol 2,4-cyclic diphosphate + CMP. Its pathway is isoprenoid biosynthesis; isopentenyl diphosphate biosynthesis via DXP pathway; isopentenyl diphosphate from 1-deoxy-D-xylulose 5-phosphate: step 4/6. Involved in the biosynthesis of isopentenyl diphosphate (IPP) and dimethylallyl diphosphate (DMAPP), two major building blocks of isoprenoid compounds. Catalyzes the conversion of 4-diphosphocytidyl-2-C-methyl-D-erythritol 2-phosphate (CDP-ME2P) to 2-C-methyl-D-erythritol 2,4-cyclodiphosphate (ME-CPP) with a corresponding release of cytidine 5-monophosphate (CMP). This is 2-C-methyl-D-erythritol 2,4-cyclodiphosphate synthase from Prosthecochloris aestuarii (strain DSM 271 / SK 413).